Reading from the N-terminus, the 600-residue chain is ATP-dependent lipid A-core flippase (600 aa).

Transmembrane regions (helical) follow at residues 26 to 46 (VGIFLLSIIGFVIFASTQPML), 82 to 102 (LLIVLIAAWQGLGSFLGNYFL), 167 to 187 (VFLFIYLLMMNWKLTLVMLAI), and 266 to 286 (PMLQLVIYSAMAVLMFLVLFL). The ABC transmembrane type-1 domain maps to 30 to 321 (LLSIIGFVIF…LSEVSSTIQK (292 aa)). Residues 353–589 (LEVKNLSFFY…NGYYARLHAM (237 aa)) form the ABC transporter domain. ATP is bound at residue 387–394 (GRSGSGKS).

It belongs to the ABC transporter superfamily. Lipid exporter (TC 3.A.1.106) family. As to quaternary structure, homodimer.

The protein localises to the cell inner membrane. The catalysed reaction is ATP + H2O + lipid A-core oligosaccharideSide 1 = ADP + phosphate + lipid A-core oligosaccharideSide 2.. In terms of biological role, involved in lipopolysaccharide (LPS) biosynthesis. Translocates lipid A-core from the inner to the outer leaflet of the inner membrane. Transmembrane domains (TMD) form a pore in the inner membrane and the ATP-binding domain (NBD) is responsible for energy generation. This Pseudomonas syringae pv. syringae (strain B728a) protein is ATP-dependent lipid A-core flippase.